The primary structure comprises 422 residues: Dihydroorotase (422 aa).

Zn(2+)-binding residues include His-53 and His-55. Residues 55-57 (HFR) and Asn-87 contribute to the substrate site. Residues Glu-138, His-172, His-223, and Asp-291 each contribute to the Zn(2+) site. Residue Asp-291 is part of the active site. Position 295 (His-295) interacts with substrate.

The protein belongs to the metallo-dependent hydrolases superfamily. DHOase family. Class I DHOase subfamily. Requires Zn(2+) as cofactor.

The enzyme catalyses (S)-dihydroorotate + H2O = N-carbamoyl-L-aspartate + H(+). It participates in pyrimidine metabolism; UMP biosynthesis via de novo pathway; (S)-dihydroorotate from bicarbonate: step 3/3. Its function is as follows. Catalyzes the reversible cyclization of carbamoyl aspartate to dihydroorotate. The chain is Dihydroorotase from Halobacterium salinarum (strain ATCC 700922 / JCM 11081 / NRC-1) (Halobacterium halobium).